A 338-amino-acid chain; its full sequence is Thiosulfate-binding protein (338 aa).

The N-terminal stretch at 1 to 25 (MAVNLLKKNSLALVASLLLAGHVQA) is a signal peptide.

It belongs to the prokaryotic sulfate-binding protein family. The complex is composed of two ATP-binding proteins (CysA), two transmembrane proteins (CysT and CysW) and a solute-binding protein (CysP).

It is found in the periplasm. Part of the ABC transporter complex CysAWTP (TC 3.A.1.6.1) involved in sulfate/thiosulfate import. This protein specifically binds thiosulfate and is involved in its transmembrane transport. This chain is Thiosulfate-binding protein (cysP), found in Escherichia coli (strain K12).